Here is a 374-residue protein sequence, read N- to C-terminus: UDP-N-acetylglucosamine--N-acetylmuramyl-(pentapeptide) pyrophosphoryl-undecaprenol N-acetylglucosamine transferase (374 aa).

UDP-N-acetyl-alpha-D-glucosamine-binding positions include 13–15 (TGG), Asn-124, Arg-165, Ser-193, and Gln-294.

This sequence belongs to the glycosyltransferase 28 family. MurG subfamily.

The protein localises to the cell inner membrane. It carries out the reaction di-trans,octa-cis-undecaprenyl diphospho-N-acetyl-alpha-D-muramoyl-L-alanyl-D-glutamyl-meso-2,6-diaminopimeloyl-D-alanyl-D-alanine + UDP-N-acetyl-alpha-D-glucosamine = di-trans,octa-cis-undecaprenyl diphospho-[N-acetyl-alpha-D-glucosaminyl-(1-&gt;4)]-N-acetyl-alpha-D-muramoyl-L-alanyl-D-glutamyl-meso-2,6-diaminopimeloyl-D-alanyl-D-alanine + UDP + H(+). Its pathway is cell wall biogenesis; peptidoglycan biosynthesis. Its function is as follows. Cell wall formation. Catalyzes the transfer of a GlcNAc subunit on undecaprenyl-pyrophosphoryl-MurNAc-pentapeptide (lipid intermediate I) to form undecaprenyl-pyrophosphoryl-MurNAc-(pentapeptide)GlcNAc (lipid intermediate II). The polypeptide is UDP-N-acetylglucosamine--N-acetylmuramyl-(pentapeptide) pyrophosphoryl-undecaprenol N-acetylglucosamine transferase (Rhizobium rhizogenes (strain K84 / ATCC BAA-868) (Agrobacterium radiobacter)).